Here is a 159-residue protein sequence, read N- to C-terminus: Transcriptional repressor NrdR (159 aa).

A compositionally biased stretch (polar residues) spans 1–11; sequence MQCPTCQNTDS. The tract at residues 1–21 is disordered; sequence MQCPTCQNTDSRVLESRSADS. Residues 3–34 fold into a zinc finger; sequence CPTCQNTDSRVLESRSADSGKSVRRRRECLNC. Residues 49–139 enclose the ATP-cone domain; sequence VSVMKKDGSR…VYRKFNGVKD (91 aa).

This sequence belongs to the NrdR family. Zn(2+) is required as a cofactor.

In terms of biological role, negatively regulates transcription of bacterial ribonucleotide reductase nrd genes and operons by binding to NrdR-boxes. In Prochlorococcus marinus (strain MIT 9215), this protein is Transcriptional repressor NrdR.